The primary structure comprises 223 residues: Phosphoribosylformylglycinamidine synthase subunit PurQ (223 aa).

Positions 2 to 223 constitute a Glutamine amidotransferase type-1 domain; sequence KFAVLKFPGS…MVNSWREQNV (222 aa). The active-site Nucleophile is C85. Residues H193 and E195 contribute to the active site.

As to quaternary structure, part of the FGAM synthase complex composed of 1 PurL, 1 PurQ and 2 PurS subunits.

The protein localises to the cytoplasm. It carries out the reaction N(2)-formyl-N(1)-(5-phospho-beta-D-ribosyl)glycinamide + L-glutamine + ATP + H2O = 2-formamido-N(1)-(5-O-phospho-beta-D-ribosyl)acetamidine + L-glutamate + ADP + phosphate + H(+). The catalysed reaction is L-glutamine + H2O = L-glutamate + NH4(+). Its pathway is purine metabolism; IMP biosynthesis via de novo pathway; 5-amino-1-(5-phospho-D-ribosyl)imidazole from N(2)-formyl-N(1)-(5-phospho-D-ribosyl)glycinamide: step 1/2. Its function is as follows. Part of the phosphoribosylformylglycinamidine synthase complex involved in the purines biosynthetic pathway. Catalyzes the ATP-dependent conversion of formylglycinamide ribonucleotide (FGAR) and glutamine to yield formylglycinamidine ribonucleotide (FGAM) and glutamate. The FGAM synthase complex is composed of three subunits. PurQ produces an ammonia molecule by converting glutamine to glutamate. PurL transfers the ammonia molecule to FGAR to form FGAM in an ATP-dependent manner. PurS interacts with PurQ and PurL and is thought to assist in the transfer of the ammonia molecule from PurQ to PurL. The protein is Phosphoribosylformylglycinamidine synthase subunit PurQ of Staphylococcus saprophyticus subsp. saprophyticus (strain ATCC 15305 / DSM 20229 / NCIMB 8711 / NCTC 7292 / S-41).